Consider the following 311-residue polypeptide: Progestin and adipoQ receptor family member 3 (311 aa).

A required for interaction with SREBF2 region spans residues 1 to 20 (MHQKLLKSAHYIELGSYQYW). Residues 1 to 73 (MHQKLLKSAH…FILSNETVNI (73 aa)) lie on the Cytoplasmic side of the membrane. The interval 41 to 60 (KDNPYITDGYRAYLPSRLCI) is required for interaction with SCAP. Positions 61-71 (KSLFILSNETV) are golgi targeting. Residues 74–96 (WSHLLGFFLFFTLGIYDMTSVLP) form a helical membrane-spanning segment. Topologically, residues 97–105 (SASASREDF) are lumenal. A helical membrane pass occupies residues 106 to 128 (VICSICLFCFQVCMLCSVGYHLF). The Cytoplasmic portion of the chain corresponds to 129–140 (SCHRSEKTCRRW). The helical transmembrane segment at 141–163 (MALDYAGISIGILGCYVSGVFYA) threads the bilayer. Residues 164–172 (FYCNNYWRQ) are Lumenal-facing. The chain crosses the membrane as a helical span at residues 173-195 (VYLITVLAMILAVFFAQIHPNYL). Over 196 to 201 (TQQWQR) the chain is Cytoplasmic. The chain crosses the membrane as a helical span at residues 202–224 (LRSIIFCSVSGYGVIPTLHWVWL). Residues 225–238 (NGGIGAPIVQDFAP) lie on the Lumenal side of the membrane. A helical transmembrane segment spans residues 239–256 (RVIVMYMIALLAFLFYIS). Residues 257–275 (KVPERYFPGQLNYLGSSHQ) are Cytoplasmic-facing. Residues 276–298 (IWHILAVVMLYWWHQSTVYVMQY) traverse the membrane as a helical segment. Residues 299–303 (RHSKP) are golgi targeting. At 299–311 (RHSKPCPDYVSHL) the chain is on the lumenal side.

This sequence belongs to the ADIPOR family. In terms of assembly, interacts with SCAP and SREBF2; the interactions are direct, increase in low cholesterol conditions and tether SCAP:SREBP complex to the Golgi apparatus. Interaction with SCAP is mutually exclusive with INSIG1. In hepatocytes, interacts with PPARA and HUWE1; the interactions promote PPARA poylubiquitination and HUWE1-mediated degradation. In macrophages, interacts with PPARG and STUB1; the interactions promote PPARG poylubiquitination and STUB1-mediated degradation. Widely expressed in a range of tissues.

It is found in the golgi apparatus membrane. Functionally, golgi-scaffold protein which modulates its interactors acitivies by anchoring them to the Golgi apparatus. Functions as a spatial regulator of RAF1 kinase by sequestrating it to the Golgi apparatus. Acts as a positive regulator of cholesterol biosynthesis by mediating the anchoring of the SCAP:SREBP complex in the Golgi apparatus, thereby promoting SCAP:SREBF2 complex formation, potentiating SREBF2 and SREBF1 processing and enhancing lipid synthesis. Also regulates PPARA and PPARG functions by mediating their interaction with E3 ubiquitin ligases, such as STUB1 or HUWE1, leading to their polyubiquitination and proteasome-mediated degradation. The chain is Progestin and adipoQ receptor family member 3 from Homo sapiens (Human).